We begin with the raw amino-acid sequence, 477 residues long: Multidrug resistance protein PmpM (477 aa).

The next 12 membrane-spanning stretches (helical) occupy residues 21–41, 56–76, 104–124, 133–153, 171–191, 202–222, 253–273, 286–306, 326–346, 360–380, 398–418, and 431–451; these read LLTLAAPIMIAQLATTAMGFV, AVALGNSIWIPMFLLMTGTLL, LALLIGPLSGAVLWWLSEPIL, LIGPSLLYLKGIALGFPAAAL, MVLGIGGLLLNIPINYALIYG, GCGWATGSVMWFMFLGMLFWV, LPIGIAVFAESSIFSVIALLI, IALNFSALVFMIPYSLGMAVT, GVGMAAALGYACVSASLMLLL, VIAIAASLIVFSALFQFSDAL, MIMTLFAYWGIGLPVGYSLGL, and LWQGLVVGLTGAAIMLCIRLA.

Belongs to the multi antimicrobial extrusion (MATE) (TC 2.A.66.1) family.

The protein localises to the cell inner membrane. Functionally, multidrug efflux pump that functions as an H(+)/drug antiporter. Confers resistance to benzalkonium chloride, fluoroquinolones, ethidium bromide, acriflavine and tetraphenylphosphonium chloride. The chain is Multidrug resistance protein PmpM (pmpM) from Pseudomonas aeruginosa (strain ATCC 15692 / DSM 22644 / CIP 104116 / JCM 14847 / LMG 12228 / 1C / PRS 101 / PAO1).